The sequence spans 209 residues: COP9 signalosome complex subunit 8 (209 aa).

The PCI domain occupies 8-179 (DNAFSFRKLL…GALDVSLNRF (172 aa)). At Ser175 the chain carries Phosphoserine.

Belongs to the CSN8 family. Component of the CSN complex, composed of COPS1/GPS1, COPS2, COPS3, COPS4, COPS5, COPS6, COPS7 (COPS7A or COPS7B), COPS8 and COPS9. In the complex, it probably interacts directly with COPS3, COPS4 and COPS7 (COPS7A or COPS7B).

It localises to the cytoplasm. The protein localises to the nucleus. Component of the COP9 signalosome complex (CSN), a complex involved in various cellular and developmental processes. The CSN complex is an essential regulator of the ubiquitin (Ubl) conjugation pathway by mediating the deneddylation of the cullin subunits of SCF-type E3 ligase complexes, leading to decrease the Ubl ligase activity of SCF-type complexes such as SCF, CSA or DDB2. The complex is also involved in phosphorylation of p53/TP53, c-jun/JUN, IkappaBalpha/NFKBIA, ITPK1 and IRF8/ICSBP, possibly via its association with CK2 and PKD kinases. CSN-dependent phosphorylation of TP53 and JUN promotes and protects degradation by the Ubl system, respectively. The polypeptide is COP9 signalosome complex subunit 8 (Cops8) (Rattus norvegicus (Rat)).